The following is a 358-amino-acid chain: 3-dehydroquinate synthase (358 aa).

NAD(+)-binding positions include 105-109, 129-130, Lys142, Lys151, and 169-172; these read GVVGD, TT, and TLKT. Glu184, His245, and His262 together coordinate Zn(2+).

It belongs to the sugar phosphate cyclases superfamily. Dehydroquinate synthase family. The cofactor is NAD(+). Co(2+) is required as a cofactor. Zn(2+) serves as cofactor.

Its subcellular location is the cytoplasm. The catalysed reaction is 7-phospho-2-dehydro-3-deoxy-D-arabino-heptonate = 3-dehydroquinate + phosphate. It functions in the pathway metabolic intermediate biosynthesis; chorismate biosynthesis; chorismate from D-erythrose 4-phosphate and phosphoenolpyruvate: step 2/7. Functionally, catalyzes the conversion of 3-deoxy-D-arabino-heptulosonate 7-phosphate (DAHP) to dehydroquinate (DHQ). The chain is 3-dehydroquinate synthase from Enterococcus faecalis (strain ATCC 47077 / OG1RF).